A 245-amino-acid chain; its full sequence is MTKSPIGGNRSGRKLGQKVKKGKLKASSRRWLERHINDPYVQRAQLEGYRARAAFKLLEIDEKHKILAGARRIIDLGAAPGSWSQIAAKVTNSTDADPRVAAIDFLEMDPIPGVRFLQLDFLDPEAPEKLKEAIGGTPDLVLSDMAAPTTGHRQTDHLRTMHLCEVAAHFAVDVLAKGGHFLAKTFQGGTERDLLNMLKQNFSQVIHVKPASSRTESVEMFLLAKGFKGRRKAETEEPAEDAAAE.

The segment at 1 to 25 is disordered; that stretch reads MTKSPIGGNRSGRKLGQKVKKGKLK. Positions 11–25 are enriched in basic residues; sequence SGRKLGQKVKKGKLK. Residues Gly81, Trp83, Asp104, Asp120, and Asp144 each coordinate S-adenosyl-L-methionine. Lys184 (proton acceptor) is an active-site residue.

The protein belongs to the class I-like SAM-binding methyltransferase superfamily. RNA methyltransferase RlmE family.

The protein resides in the cytoplasm. The enzyme catalyses uridine(2552) in 23S rRNA + S-adenosyl-L-methionine = 2'-O-methyluridine(2552) in 23S rRNA + S-adenosyl-L-homocysteine + H(+). Specifically methylates the uridine in position 2552 of 23S rRNA at the 2'-O position of the ribose in the fully assembled 50S ribosomal subunit. The polypeptide is Ribosomal RNA large subunit methyltransferase E (Sinorhizobium fredii (strain NBRC 101917 / NGR234)).